The sequence spans 81 residues: ATP synthase subunit c, chloroplastic (81 aa).

A run of 2 helical transmembrane segments spans residues 7–27 (AASV…PGIG) and 57–77 (LAFM…LLFA).

The protein belongs to the ATPase C chain family. F-type ATPases have 2 components, F(1) - the catalytic core - and F(0) - the membrane proton channel. F(1) has five subunits: alpha(3), beta(3), gamma(1), delta(1), epsilon(1). F(0) has four main subunits: a(1), b(1), b'(1) and c(10-14). The alpha and beta chains form an alternating ring which encloses part of the gamma chain. F(1) is attached to F(0) by a central stalk formed by the gamma and epsilon chains, while a peripheral stalk is formed by the delta, b and b' chains.

Its subcellular location is the plastid. The protein localises to the chloroplast thylakoid membrane. In terms of biological role, f(1)F(0) ATP synthase produces ATP from ADP in the presence of a proton or sodium gradient. F-type ATPases consist of two structural domains, F(1) containing the extramembraneous catalytic core and F(0) containing the membrane proton channel, linked together by a central stalk and a peripheral stalk. During catalysis, ATP synthesis in the catalytic domain of F(1) is coupled via a rotary mechanism of the central stalk subunits to proton translocation. Its function is as follows. Key component of the F(0) channel; it plays a direct role in translocation across the membrane. A homomeric c-ring of between 10-14 subunits forms the central stalk rotor element with the F(1) delta and epsilon subunits. The polypeptide is ATP synthase subunit c, chloroplastic (Cryptomeria japonica (Japanese cedar)).